The following is a 173-amino-acid chain: Shikimate kinase 1 (173 aa).

Residue 14–19 (GAGKST) participates in ATP binding. S18 serves as a coordination point for Mg(2+). Positions 36, 60, and 82 each coordinate substrate. R120 is an ATP binding site. R140 serves as a coordination point for substrate. An ATP-binding site is contributed by Q157.

It belongs to the shikimate kinase family. As to quaternary structure, monomer. Mg(2+) serves as cofactor.

The protein resides in the cytoplasm. The catalysed reaction is shikimate + ATP = 3-phosphoshikimate + ADP + H(+). The protein operates within metabolic intermediate biosynthesis; chorismate biosynthesis; chorismate from D-erythrose 4-phosphate and phosphoenolpyruvate: step 5/7. Catalyzes the specific phosphorylation of the 3-hydroxyl group of shikimic acid using ATP as a cosubstrate. In Pectobacterium atrosepticum (strain SCRI 1043 / ATCC BAA-672) (Erwinia carotovora subsp. atroseptica), this protein is Shikimate kinase 1.